Consider the following 256-residue polypeptide: Pimeloyl-[acyl-carrier protein] methyl ester esterase (256 aa).

Residues 15–242 (HLVLLHGWGL…AAHAPFISHP (228 aa)) enclose the AB hydrolase-1 domain. Substrate contacts are provided by residues tryptophan 22, 82–83 (SL), and 143–147 (FLALQ). Serine 82 serves as the catalytic Nucleophile. Active-site residues include aspartate 207 and histidine 235. Residue histidine 235 coordinates substrate.

This sequence belongs to the AB hydrolase superfamily. Carboxylesterase BioH family. Monomer.

It localises to the cytoplasm. The catalysed reaction is 6-carboxyhexanoyl-[ACP] methyl ester + H2O = 6-carboxyhexanoyl-[ACP] + methanol + H(+). Its pathway is cofactor biosynthesis; biotin biosynthesis. Its function is as follows. The physiological role of BioH is to remove the methyl group introduced by BioC when the pimeloyl moiety is complete. It allows to synthesize pimeloyl-ACP via the fatty acid synthetic pathway through the hydrolysis of the ester bonds of pimeloyl-ACP esters. The polypeptide is Pimeloyl-[acyl-carrier protein] methyl ester esterase (Shigella boydii serotype 18 (strain CDC 3083-94 / BS512)).